Reading from the N-terminus, the 570-residue chain is NADPH oxidase 2 (570 aa).

Residues 2–9 (GNWVVNEG) lie on the Cytoplasmic side of the membrane. Residues 10–36 (ISIFVILVWLGMNVFLFVWYYRVYDIP) traverse the membrane as a helical segment. Over 37–46 (DKFFYTRKLL) the chain is Extracellular. Residues 47–72 (GSALALARAPAACLNFNCMLILLPVC) traverse the membrane as a helical segment. The region spanning 54–286 (RAPAACLNFN…MFLYLCERLV (233 aa)) is the Ferric oxidoreductase domain. Over 73 to 95 (RNLLSFLRGSSACCSTRIRRQLD) the chain is Cytoplasmic. The helical transmembrane segment at 96-130 (RNLTFHKMVAWMIALHTAIHTIAHLFNVEWCVNAR) threads the bilayer. Heme b is bound by residues H101 and H115. Over 131-163 (VNNSDPYSIALSDIGDKPNETYLNFVRQRIKNP) the chain is Extracellular. N-linked (GlcNAc...) asparagine glycosylation is found at N132 and N149. K161 is covalently cross-linked (Glycyl lysine isopeptide (Lys-Gly) (interchain with G-Cter in ubiquitin)). A helical transmembrane segment spans residues 164-194 (EGGLYVAVTRLAGITGVVITLCLILIITSST). The Cytoplasmic segment spans residues 195–203 (KTIRRSYFE). FAD is bound by residues R199 and S200. The chain crosses the membrane as a helical span at residues 204-222 (VFWYTHHLFVIFFIGLAIH). Heme b-binding residues include W206, H209, H222, R226, and I227. Topologically, residues 223 to 267 (GAQRIVRGQTAESLLKHQPRNCYQNISQWGKIENCPIPEFSGNPP) are extracellular. An N-linked (GlcNAc...) asparagine glycan is attached at N247. Heme b is bound by residues M268, Y280, and R287. A helical membrane pass occupies residues 268–285 (MTWKWIVGPMFLYLCERL). Over 286–570 (VRFWRSQQKV…VHFIFNKENF (285 aa)) the chain is Cytoplasmic. In terms of domain architecture, FAD-binding FR-type spans 287–397 (RFWRSQQKVV…DGPFGTASED (111 aa)). Glycyl lysine isopeptide (Lys-Gly) (interchain with G-Cter in ubiquitin) cross-links involve residues K294, K299, K306, K328, and K334. FAD contacts are provided by W337, H338, P339, T341, H354, R356, W361, and T362. K381 is covalently cross-linked (Glycyl lysine isopeptide (Lys-Gly) (interchain with G-Cter in ubiquitin)). The NADPH site is built by I411, R446, and T481. K506 is covalently cross-linked (Glycyl lysine isopeptide (Lys-Gly) (interchain with G-Cter in ubiquitin)). R513 contacts NADPH. K567 is covalently cross-linked (Glycyl lysine isopeptide (Lys-Gly) (interchain with G-Cter in ubiquitin)).

As to quaternary structure, component of the phagocyte NADPH oxidase core complex/cytochrome b558 complex, composed of CYBB (heavy chain (beta)) and CYBA (light chain (alpha)). Component of the phagocyte NADPH oxidase complex composed of an obligatory core heterodimer formed by the membrane proteins CYBA and CYBB and the cytosolic regulatory subunits NCF1/p47-phox, NCF2/p67-phox, NCF4/p40-phox and the small GTPase RAC1 or RAC2. Interacts with NCF1 (phosphorylated form). Interacts with NCF2; the interaction is enhanced in the presence of GBP7. Interacts with RAC2. Interacts with RAC1. Interacts with calprotectin (S100A8/9). Interacts with NRROS; the interaction is direct and impairs formation of a stable NADPH oxidase complex. Interacts with CYBC1; CYBC1 may act as a chaperone stabilizing Cytochrome b-245 heterodimer. The CYBA-CYBB complex interacts with GBP7. It depends on FAD as a cofactor. Glycosylated. Post-translationally, phosphorylated on Ser and Thr residues by PKC during neutrophils activation. Phosphorylation enhances the NADPH oxidase activity and stimulates its interaction with RAC2, NCF2/p67-phox, and NCF1/p47-phox. In terms of processing, undergoes 'Lys-48'-linked polyubiquitination, likely by RNF145, triggering endoplasmic reticulum-associated degradation.

The protein resides in the cell membrane. The catalysed reaction is NADPH + 2 O2 = 2 superoxide + NADP(+) + H(+). Catalytic subunit of the phagocyte NADPH oxidase complex that mediates the transfer of electrons from cytosolic NADPH to O2 to produce the superoxide anion (O2(-)). In the activated complex, electrons are first transferred from NADPH to flavin adenine dinucleotide (FAD) and subsequently transferred via two heme molecules to molecular oxygen, producing superoxide through an outer-sphere reaction. Activation of the NADPH oxidase complex is initiated by the assembly of cytosolic subunits of the NADPH oxidase complex with the core NADPH oxidase complex to form a complex at the plasma membrane or phagosomal membrane. This activation process is initiated by phosphorylation dependent binding of the cytosolic NCF1/p47-phox subunit to the C-terminus of CYBA/p22-phox. NADPH oxidase complex assembly is impaired through interaction with NRROS. In Bos taurus (Bovine), this protein is NADPH oxidase 2.